A 393-amino-acid chain; its full sequence is MVIKPKIRGFICTNAHPEGCAASVAQQIEYVSSQGDLGSGPKNVLVIGSSTGYGLASRIVSAFGYGANTLGVCFEKAPSERKTATAGWYNTAAFHKEAKEKGLFAQTINGDAFSKEIKAQAIETIKREMGQVDLVIYSLASPRRTDPETGEVYKSTLKPVGQAYTTKTYDTDKDRIHDISLEPANEDEIAQTIKVMGGEDWELWLDALAEADLLAYGCKTTAYTYIGKELTWPIYGQATIGKAKEDLDRAAAAIVSKNQEKHIEAYVSSLKALVTQASSAIPVMPLYISLIYKVMKEEGTHEGCIEQIKGLFTERLFAQSPALDEQGRLRMDGKETNEATQAKIKALWDQVTQENFHELSDYAGYHHEFLKLFGFDVEGVDYEKEQNTLADWD.

Residues 48 to 53 (GSSTGY), 74 to 75 (FE), 111 to 112 (DA), and 139 to 140 (LA) contribute to the NAD(+) site. A substrate-binding site is contributed by Tyr225. Catalysis depends on Tyr235, which acts as the Proton donor. NAD(+) contacts are provided by residues Lys244 and 273 to 275 (LVT).

It belongs to the TER reductase family. In terms of assembly, monomer.

It carries out the reaction a 2,3-saturated acyl-[ACP] + NAD(+) = a (2E)-enoyl-[ACP] + NADH + H(+). The protein operates within lipid metabolism; fatty acid biosynthesis. Its function is as follows. Involved in the final reduction of the elongation cycle of fatty acid synthesis (FAS II). Catalyzes the reduction of a carbon-carbon double bond in an enoyl moiety that is covalently linked to an acyl carrier protein (ACP). The sequence is that of Enoyl-[acyl-carrier-protein] reductase [NADH] from Pseudoalteromonas atlantica (strain T6c / ATCC BAA-1087).